A 284-amino-acid polypeptide reads, in one-letter code: Tropomyosin (284 aa).

A disordered region spans residues 1–54; it reads MDAIKKKMQAMKLEKDNAMDRADTLEQQNKEANNRAEKTEEEIRATQKKMQQVE. A coiled-coil region spans residues 1–273; that stretch reads MDAIKKKMQA…KEKYKSITDE (273 aa). The span at 12 to 45 shows a compositional bias: basic and acidic residues; it reads KLEKDNAMDRADTLEQQNKEANNRAEKTEEEIRA.

This sequence belongs to the tropomyosin family. Homodimer. As to expression, muscle (at protein level). Expressed in leg and chest protection muscle (at protein level). Expressed in claw muscle.

Functionally, tropomyosin, in association with the troponin complex, plays a central role in the calcium dependent regulation of muscle contraction. The chain is Tropomyosin from Eriocheir sinensis (Chinese mitten crab).